The sequence spans 242 residues: MTNSPLIQFNIKKLIDIKMFGLDVSFTNSSIYMLLASTLALTYFYLAFYNRKLIPSRLQVSAEIVYNFVVDMLNQNIGIKGRKFIPLVFSLFIFILFCNLLGMTPYSFTATSHIIVTFTLALLIFLTVTIVGFIKHGMSFLTLFLPQGTPVWLAPLMIVIELFTYLAKPVSLSLRLAANMMAGHVLLKVIAGFTVSLMIYLKFLPIPLIVILIGFEIFVAILQAYIFTILSCMYLNDAINLH.

Transmembrane regions (helical) follow at residues 29–49 (SSIYMLLASTLALTYFYLAFY), 84–104 (FIPLVFSLFIFILFCNLLGMT), 114–134 (IIVTFTLALLIFLTVTIVGFI), 140–160 (FLTLFLPQGTPVWLAPLMIVI), 181–201 (MAGHVLLKVIAGFTVSLMIYL), and 203–223 (FLPIPLIVILIGFEIFVAILQ).

This sequence belongs to the ATPase A chain family. As to quaternary structure, F-type ATPases have 2 components, CF(1) - the catalytic core - and CF(0) - the membrane proton channel. CF(1) has five subunits: alpha(3), beta(3), gamma(1), delta(1), epsilon(1). CF(0) has three main subunits: a(1), b(2) and c(9-12). The alpha and beta chains form an alternating ring which encloses part of the gamma chain. CF(1) is attached to CF(0) by a central stalk formed by the gamma and epsilon chains, while a peripheral stalk is formed by the delta and b chains.

Its subcellular location is the cell inner membrane. Its function is as follows. Key component of the proton channel; it plays a direct role in the translocation of protons across the membrane. The polypeptide is ATP synthase subunit a (Rickettsia typhi (strain ATCC VR-144 / Wilmington)).